Consider the following 541-residue polypeptide: 5' exonuclease Apollo (541 aa).

Residue Lys334 forms a Glycyl lysine isopeptide (Lys-Gly) (interchain with G-Cter in SUMO2) linkage. The segment at 455–475 (PLLSRGDSGSPARGNQSDCVG) is disordered. The TBM motif lies at 492-507 (ESRGLALKYLLTPVHF).

Belongs to the DNA repair metallo-beta-lactamase (DRMBL) family. Interacts with MUS81, MRE11 and FANCD2. Interacts with HSPA2, HSPA8 and HSPA14. Interacts with SPAG5. Interacts with TERF2; the interaction is direct. Ubiquitinated, leading to its degradation. Interaction with TERF2 protects it from ubiquitination.

The protein resides in the chromosome. It is found in the telomere. Its subcellular location is the nucleus. It localises to the cytoplasm. The protein localises to the cytoskeleton. The protein resides in the microtubule organizing center. It is found in the centrosome. It catalyses the reaction a beta-lactam + H2O = a substituted beta-amino acid. Its function is as follows. 5'-3' exonuclease that plays a central role in telomere maintenance and protection during S-phase. Participates in the protection of telomeres against non-homologous end-joining (NHEJ)-mediated repair, thereby ensuring that telomeres do not fuse. Plays a key role in telomeric loop (T loop) formation by being recruited by TERF2 at the leading end telomeres and by processing leading-end telomeres immediately after their replication via its exonuclease activity: generates 3' single-stranded overhang at the leading end telomeres avoiding blunt leading-end telomeres that are vulnerable to end-joining reactions and expose the telomere end in a manner that activates the DNA repair pathways. Together with TERF2, required to protect telomeres from replicative damage during replication by controlling the amount of DNA topoisomerase (TOP1, TOP2A and TOP2B) needed for telomere replication during fork passage and prevent aberrant telomere topology. Also involved in response to DNA damage: plays a role in response to DNA interstrand cross-links (ICLs) by facilitating double-strand break formation. In case of spindle stress, involved in prophase checkpoint. Possesses beta-lactamase activity, catalyzing the hydrolysis of penicillin G and nitrocefin. Exhibits no activity towards other beta-lactam antibiotic classes including cephalosporins (cefotaxime) and carbapenems (imipenem). In Mus musculus (Mouse), this protein is 5' exonuclease Apollo (Dclre1b).